An 828-amino-acid chain; its full sequence is MNSTEFTEDVEEVLKSITVKVETEAEDAALDCSVNSRTSEKHSVDSVLTALQDSSKRKQLVSDGLLDSVPGVKRRRLIPEALLAGMRNRENSSPCQGNGEQAGRGRSLGNVWPGEEEPCNDATTPSYKKPLYGISHKIMEKKNPPSGDLLNVYELFEKANASNSPSSLRLLNEPQKRDCGSTGAGTDNDPNIYFLIQKMFYMLNTLTSNMSQLHSKVDLLSLEVSRIKKQVSPTEMVAKFQPPPEYQLTAAELKQIVDQSLSGGDLACRLLVQLFPELFSDVDFSRGCSACGFAAKRKLESLHLQLIRNYVEVYYPSVKDTAVWQAECLPQLNDFFSRFWAQREMEDSQPSGQVASFFEAEQVDPGHFLDNKDQEEALSLDRSSTIASDHVVDTQDLTEFLDEASSPGEFAVFLLHRLFPELFDHRKLGEQYSCYGDGGKQELDPQRLQIIRNYTEIYFPDMQEEEAWLQQCAQRINDELEGLGLDAGSEGDPPRDDCYDSSSLPDDISVVKVEDSFEGERPGRRSKKIWLVPIDFDKLEIPQPDFEVPGADCLLSKEQLRSIYESSLSIGNFASRLLVHLFPELFTHENLRKQYNCSGSLGKKQLDPSRIKLIRHYVQLLYPRAKNDRVWTLEFVGKLDERCRRRDTEQRRSYQQQRKVHVPGPECRDLTSYAINPERFREEFEGPPLPPERSSKDFCKIPLDELVVPSPDFPVPSPYLLSDKEVREIVQQSLSVGNFAARLLVRLFPELFTAENLRLQYNHSGACNKKQLDPTRLRLIRHYVEAVYPVEKMEEVWHYECIPSIDERCRRPNRKKCDILKKAKKVEK.

Lysine 20 participates in a covalent cross-link: Glycyl lysine isopeptide (Lys-Gly) (interchain with G-Cter in SUMO); alternate. Lysine 20 participates in a covalent cross-link: Glycyl lysine isopeptide (Lys-Gly) (interchain with G-Cter in SUMO1); alternate. A Glycyl lysine isopeptide (Lys-Gly) (interchain with G-Cter in SUMO2); alternate cross-link involves residue lysine 20. Glycyl lysine isopeptide (Lys-Gly) (interchain with G-Cter in SUMO2) cross-links involve residues lysine 41, lysine 56, lysine 58, lysine 73, lysine 128, lysine 129, lysine 137, lysine 142, and lysine 158. The Nuclear localization signal motif lies at 56 to 58; the sequence is KRK. Position 164 is a phosphoserine (serine 164). A disordered region spans residues 164–184; that stretch reads SPSSLRLLNEPQKRDCGSTGA. Lysine 176 is covalently cross-linked (Glycyl lysine isopeptide (Lys-Gly) (interchain with G-Cter in SUMO2)). Residues 242-343 form the BEN 1 domain; that stretch reads PPPEYQLTAA…DFFSRFWAQR (102 aa). Serine 379 carries the post-translational modification Phosphoserine. The BEN 2 domain maps to 387-487; the sequence is ASDHVVDTQD…DELEGLGLDA (101 aa). Lysine 427 participates in a covalent cross-link: Glycyl lysine isopeptide (Lys-Gly) (interchain with G-Cter in SUMO2). A disordered region spans residues 483–504; that stretch reads LGLDAGSEGDPPRDDCYDSSSL. Serine 489 bears the Phosphoserine mark. Residue lysine 512 forms a Glycyl lysine isopeptide (Lys-Gly) (interchain with G-Cter in SUMO); alternate linkage. Residue lysine 512 forms a Glycyl lysine isopeptide (Lys-Gly) (interchain with G-Cter in SUMO2); alternate linkage. Lysine 528 is covalently cross-linked (Glycyl lysine isopeptide (Lys-Gly) (interchain with G-Cter in SUMO2)). The BEN 3 domain maps to 548 to 650; that stretch reads VPGADCLLSK…ERCRRRDTEQ (103 aa). A Glycyl lysine isopeptide (Lys-Gly) (interchain with G-Cter in SUMO2) cross-link involves residue lysine 700. The 102-residue stretch at 715–816 folds into the BEN 4 domain; it reads VPSPYLLSDK…ERCRRPNRKK (102 aa).

In terms of assembly, homooligomer, probably a homooctamer. Interacts with HDAC2 and HDAC3, but not HDAC1. Interacts with SALL4. Interacts with SMARCA5/SNF2H, BAZ2A/TIP5 and USP21. Interacts with the nucleosome remodeling and histone deacetylase (NuRD) repressor complex. Interacts (via BEN domains 1 and 3) with ERCC6L (via N-terminal TPR repeat); the interaction is direct. Post-translationally, sumoylated at Lys-20 by SUMO1 and at Lys-512 by SUMO1, SUMO2 and SUMO3. Sumoylation probably occurs sequentially, with that of Lys-20 preceding that of Lys-512. It does not alter association with heterochromatin, but is required for the repression of transcription. Expressed at least in heart, kidney, liver, ovary and spleen, with highest levels in spleen and lowest in heart. Expressed on the surface of T-cells.

It is found in the nucleus. The protein localises to the nucleolus. Functionally, transcriptional repressor which associates with the NoRC (nucleolar remodeling complex) complex and plays a key role in repressing rDNA transcription. The sumoylated form modulates the stability of the NoRC complex component BAZ2A/TIP5 by controlling its USP21-mediated deubiquitination. Binds to unmethylated major satellite DNA and is involved in the recruitment of the Polycomb repressive complex 2 (PRC2) to major satellites. Stimulates the ERCC6L translocase and ATPase activities. This chain is BEN domain-containing protein 3 (BEND3), found in Homo sapiens (Human).